The chain runs to 330 residues: 4,5-dihydroxyphthalate decarboxylase (330 aa).

It to P.putida DHP decarboxylase.

The enzyme catalyses 4,5-dihydroxyphthalate + H(+) = 3,4-dihydroxybenzoate + CO2. It participates in xenobiotic degradation; phthalate degradation; 3,4-dihydroxybenzoate from phthalate: step 3/3. The protein is 4,5-dihydroxyphthalate decarboxylase (phtD) of Comamonas testosteroni (Pseudomonas testosteroni).